We begin with the raw amino-acid sequence, 698 residues long: Dual trans-enoyl reductase/FAD-dependent monooxygenase tazHJ (698 aa).

NADP(+) is bound by residues 54–57 (STAT), 78–81 (SPRH), Tyr-96, and 279–280 (IA). Glu-299, Gly-312, and Arg-372 together coordinate FAD. Residue Arg-455 is part of the active site. Residues Asp-571 and Ala-584 each contribute to the FAD site.

This sequence in the N-terminal section; belongs to the zinc-containing alcohol dehydrogenase family. The protein in the C-terminal section; belongs to the paxM FAD-dependent monooxygenase family.

It participates in secondary metabolite biosynthesis. Functionally, dual trans-enoyl reductase/FAD-dependent monooxygenase; part of the gene cluster that mediates the biosynthesis of azaterrilone A and other azaphilones, a class of fungal metabolites characterized by a highly oxygenated pyrano-quinone bicyclic core and exhibiting a broad range of bioactivities. The first step of the pathway begins with the non-reducing polyketide synthase tazA that assembles one acetyl-CoA starter unit, five malonyl-CoA units, and catalyzes a series of Claisen condensations, methylation, PT-mediated cyclization, and finally releases the first hexaketide precursor through the R-domain. The tazA product then undergoes reduction on its terminal ketone and the following pyran-ring formation by yet undetermined enzyme(s). Dehydration and enoyl reduction, possibly involving the trans-enoyl reductase tazE leads to the next intermediate. TazD is predicted as an acetyltransferase and might catalyze the acetylation steps leading to the synthesis of azaterrilone A. Azaterrilone A is not the final product of the taz pathway and both the highly reducing polyketide synthase tazB and the dual enzyme tazHJ catalyze late steps of the pathway, leading to the production of the 2 final stereoisomers that contain additional polyketide modification whose structures have still to be determined. The protein is Dual trans-enoyl reductase/FAD-dependent monooxygenase tazHJ of Aspergillus terreus (strain NIH 2624 / FGSC A1156).